Reading from the N-terminus, the 310-residue chain is MEFKHISVLLNECLDALDIKDNGIYVDCTLGGAGHSSHILERLSNEGLLIGIDQDRDALKAAKERLKRFENVKYVHSNFYDIDNILQNLDIPKVDGILMDLGVSSYQLDEGARGFSYMKDAPLDMRMNRDNDFSAYEIVNEYSEDELYKIIRNYGEERFAKRISNCIVNRRSDKPIETTMELVDIIKAAIPAKARREGPHPAKRTFQAIRIEVNSELKILNQTIEDGVNRLKPGGRMAIITFHSLEDRIVKLKFRELNDPCTCPREFPMCICGKKPSVRLISRKGIEPTKEEVEENPRSRSAKLRIIEKL.

Residues 33–35 (AGH), Asp53, Phe79, Asp100, and Gln107 contribute to the S-adenosyl-L-methionine site.

It belongs to the methyltransferase superfamily. RsmH family.

It is found in the cytoplasm. The enzyme catalyses cytidine(1402) in 16S rRNA + S-adenosyl-L-methionine = N(4)-methylcytidine(1402) in 16S rRNA + S-adenosyl-L-homocysteine + H(+). Specifically methylates the N4 position of cytidine in position 1402 (C1402) of 16S rRNA. The protein is Ribosomal RNA small subunit methyltransferase H of Clostridium botulinum (strain Eklund 17B / Type B).